Reading from the N-terminus, the 98-residue chain is NADH-ubiquinone oxidoreductase chain 4L (98 aa).

3 helical membrane-spanning segments follow: residues 1–21 (MPLI…GMLV), 29–49 (SLLC…LMTL), and 58–78 (IVPI…LALL).

Belongs to the complex I subunit 4L family. Core subunit of respiratory chain NADH dehydrogenase (Complex I) which is composed of 45 different subunits.

It is found in the mitochondrion inner membrane. It carries out the reaction a ubiquinone + NADH + 5 H(+)(in) = a ubiquinol + NAD(+) + 4 H(+)(out). Functionally, core subunit of the mitochondrial membrane respiratory chain NADH dehydrogenase (Complex I) which catalyzes electron transfer from NADH through the respiratory chain, using ubiquinone as an electron acceptor. Part of the enzyme membrane arm which is embedded in the lipid bilayer and involved in proton translocation. The polypeptide is NADH-ubiquinone oxidoreductase chain 4L (MT-ND4L) (Pan paniscus (Pygmy chimpanzee)).